Reading from the N-terminus, the 205-residue chain is MFITFEGIDGSGKTIQSELLANYFKQIHGENNMVLTREPGGTDFAEKVRGILLKDSIDPVSELLLLISMRYEHVKKVILPALKKGKIVICDRFIDSTIAYQGYGLGVDLELIRDLHKLVKIKYPDTTFILDIDVQIGLSRAMDKNKYEEMNISFYNKVRKGFQEIAINEPDRCSIITEIEAKDNNQVHVEIVNKVTATKPVLLRK.

7 to 14 (GIDGSGKT) contributes to the ATP binding site.

The protein belongs to the thymidylate kinase family.

It catalyses the reaction dTMP + ATP = dTDP + ADP. Its function is as follows. Phosphorylation of dTMP to form dTDP in both de novo and salvage pathways of dTTP synthesis. In Wolbachia sp. subsp. Brugia malayi (strain TRS), this protein is Thymidylate kinase.